A 121-amino-acid chain; its full sequence is Basic phospholipase A2 homolog GodMT-II (121 aa).

7 disulfides stabilise this stretch: Cys-26-Cys-115, Cys-28-Cys-44, Cys-43-Cys-95, Cys-49-Cys-121, Cys-50-Cys-88, Cys-57-Cys-81, and Cys-75-Cys-86. Residues 105–117 form an important for membrane-damaging activities in eukaryotes and bacteria; heparin-binding region; the sequence is KNYKIYPKPLCKK.

Belongs to the phospholipase A2 family. Group II subfamily. K49 sub-subfamily. Monomer. As to expression, expressed by the venom gland.

The protein localises to the secreted. Its function is as follows. Snake venom phospholipase A2 homolog that lacks enzymatic activity but shows high myotoxic activities. In vivo, induces a mild edema when subcutaneously injected into mice foot pad. In Cerrophidion godmani (Porthidium godmani), this protein is Basic phospholipase A2 homolog GodMT-II.